The following is a 427-amino-acid chain: MSAIVDIIGREILDSRGNPTVECDVLLESGTMGRAAVPSGASTGSREAIELRDGEAGRYNGKGVLKAVEHINTEISEAIMGLDASEQAFLDKTLLELDGTDNKSRLGANAMLAVSMAVAKAAAEEAGLPLYRYFGGSGAMQLPVPMMNIVNGGAHANNSLDIQEFMIVPVSQPTFREALRCGAEVFHALKKILSDRGMSTAVGDEGGFAPNFGSNDECLSTILQAIEKAGYRAGEDVLLALDCAASEFYHDGKYQLAGEGLQLSSAEFTDYLATLADKFPIVSIEDGMHEGDWDGWKLLTERLGKKVQLVGDDLFVTNTRILKEGIEKGIANSILIKINQIGTLTETFAAIEMAKRAGYTAVISHRSGETEDSTIADIAVGLNAGQIKTGSLSRSDRISKYNQLLRIEEDLGDIASYPGKSAFYNLR.

Q163 contributes to the (2R)-2-phosphoglycerate binding site. Residue E205 is the Proton donor of the active site. Positions 242, 285, and 312 each coordinate Mg(2+). Residues K337, R366, S367, and K388 each contribute to the (2R)-2-phosphoglycerate site. K337 acts as the Proton acceptor in catalysis.

This sequence belongs to the enolase family. Mg(2+) is required as a cofactor.

The protein localises to the cytoplasm. It localises to the secreted. The protein resides in the cell surface. The catalysed reaction is (2R)-2-phosphoglycerate = phosphoenolpyruvate + H2O. It functions in the pathway carbohydrate degradation; glycolysis; pyruvate from D-glyceraldehyde 3-phosphate: step 4/5. Catalyzes the reversible conversion of 2-phosphoglycerate (2-PG) into phosphoenolpyruvate (PEP). It is essential for the degradation of carbohydrates via glycolysis. The polypeptide is Enolase (Burkholderia vietnamiensis (strain G4 / LMG 22486) (Burkholderia cepacia (strain R1808))).